We begin with the raw amino-acid sequence, 399 residues long: Dual-specificity RNA methyltransferase RlmN (399 aa).

E121 functions as the Proton acceptor in the catalytic mechanism. The Radical SAM core domain occupies 127 to 376; sequence DVDRGTLCVS…VRTPRGRDIL (250 aa). C134 and C379 are oxidised to a cystine. The [4Fe-4S] cluster site is built by C141, C145, and C148. Residues 205-206, S237, 259-261, and N336 contribute to the S-adenosyl-L-methionine site; these read GE and SLH. Catalysis depends on C379, which acts as the S-methylcysteine intermediate.

The protein belongs to the radical SAM superfamily. RlmN family. [4Fe-4S] cluster serves as cofactor.

It is found in the cytoplasm. It catalyses the reaction adenosine(2503) in 23S rRNA + 2 reduced [2Fe-2S]-[ferredoxin] + 2 S-adenosyl-L-methionine = 2-methyladenosine(2503) in 23S rRNA + 5'-deoxyadenosine + L-methionine + 2 oxidized [2Fe-2S]-[ferredoxin] + S-adenosyl-L-homocysteine. The catalysed reaction is adenosine(37) in tRNA + 2 reduced [2Fe-2S]-[ferredoxin] + 2 S-adenosyl-L-methionine = 2-methyladenosine(37) in tRNA + 5'-deoxyadenosine + L-methionine + 2 oxidized [2Fe-2S]-[ferredoxin] + S-adenosyl-L-homocysteine. In terms of biological role, specifically methylates position 2 of adenine 2503 in 23S rRNA and position 2 of adenine 37 in tRNAs. m2A2503 modification seems to play a crucial role in the proofreading step occurring at the peptidyl transferase center and thus would serve to optimize ribosomal fidelity. The chain is Dual-specificity RNA methyltransferase RlmN from Methylocella silvestris (strain DSM 15510 / CIP 108128 / LMG 27833 / NCIMB 13906 / BL2).